The primary structure comprises 234 residues: Sugar fermentation stimulation protein A (234 aa).

A DNA-binding region (H-T-H motif) is located at residues 201-220 (LLSEAQQRGVEILAYKAEIS).

The protein belongs to the SfsA family.

Its function is as follows. Binds to DNA non-specifically. Could be a regulatory factor involved in maltose metabolism. In Shigella boydii serotype 4 (strain Sb227), this protein is Sugar fermentation stimulation protein A.